The following is a 475-amino-acid chain: Glycogen synthase (475 aa).

An ADP-alpha-D-glucose-binding site is contributed by K15.

Belongs to the glycosyltransferase 1 family. Bacterial/plant glycogen synthase subfamily.

The catalysed reaction is [(1-&gt;4)-alpha-D-glucosyl](n) + ADP-alpha-D-glucose = [(1-&gt;4)-alpha-D-glucosyl](n+1) + ADP + H(+). Its pathway is glycan biosynthesis; glycogen biosynthesis. Its function is as follows. Synthesizes alpha-1,4-glucan chains using ADP-glucose. The chain is Glycogen synthase from Kosmotoga olearia (strain ATCC BAA-1733 / DSM 21960 / TBF 19.5.1).